Consider the following 772-residue polypeptide: MENNAYPTLPLKNTVLFPHLVLPLSVGRAGSIAAVEAALSSEDKLIAVFPQKDPRTDEPAADDLFRFGTVGIIKKMVRSEDTVQILVQGIERVEQLEMVQKQPYLSLKIATLSEPSDTGTEIEALHRTVIELAGKMIELVQPQIQVGIHHIISDVEKPLHQIYLLTSILSLDFDKEKELLAAATQVEALQLMHRYLNHEVQVLEVRQKITSTAQTEIDKKQREYVLRQQLEAIQEELGETNPEQAEIKELRQRMEETELPELVRKEVEKEITRLERMPSAAPDYQLTRGYVELALELPWNKTTEDRLDLKRAREILDEDHFDLEDVKERIIEHLAVMKLNPEAKSPILCFVGPPGVGKTSVGQSMARALGRKFERMSLGGLHDESELRGHRRTYIGAMPGRIIRAIRRTGYQNPLLMLDEIDKLGRDFRGDPAAALLEILDPAQNAEFHDNYLDLPFDLSKIFFVTTANTLDTIPRPLLDRMEILRLPGYSDEEKQHIARRYLIGRQIREAGLSEIQLSIPDETLSYLIRRYTREAGVRELERMLGRIARKVATQVATGQTQPVTVTPQDLVELLGPERFFAEEMRQQLAPGVAAGLAWTEAGGDVLYVEAALLPEGKGMTLTGQLGSIMQESAKAAQSYLWSRAEELNIDQKTIRESGVHIHVPAGAIPKDGPSAGVTMASALTSAYAHQPVRSDTAMTGEITLSGLVLPVGGIKEKVLAAHRSGIQRIILPKENEKDLREIPEHVRQSIQFILARRIEEVLAEAIPDLNR.

In terms of domain architecture, Lon N-terminal spans 6 to 200 (YPTLPLKNTV…LMHRYLNHEV (195 aa)). Residue 352 to 359 (GPPGVGKT) participates in ATP binding. The Lon proteolytic domain maps to 588-769 (QLAPGVAAGL…EEVLAEAIPD (182 aa)). Catalysis depends on residues serine 675 and lysine 718.

It belongs to the peptidase S16 family. As to quaternary structure, homohexamer. Organized in a ring with a central cavity.

The protein localises to the cytoplasm. The enzyme catalyses Hydrolysis of proteins in presence of ATP.. Functionally, ATP-dependent serine protease that mediates the selective degradation of mutant and abnormal proteins as well as certain short-lived regulatory proteins. Required for cellular homeostasis and for survival from DNA damage and developmental changes induced by stress. Degrades polypeptides processively to yield small peptide fragments that are 5 to 10 amino acids long. Binds to DNA in a double-stranded, site-specific manner. This chain is Lon protease, found in Nitrosococcus oceani (strain ATCC 19707 / BCRC 17464 / JCM 30415 / NCIMB 11848 / C-107).